The sequence spans 81 residues: Penaeidin-3j (81 aa).

Residues 1–19 (MRLVVCLVFLASFALVCQG) form the signal peptide. Glutamine 20 is modified (pyrrolidone carboxylic acid). Intrachain disulfides connect cysteine 50–cysteine 65, cysteine 54–cysteine 72, and cysteine 66–cysteine 73. Serine 80 carries the serine amide modification.

This sequence belongs to the penaeidin family.

It localises to the cytoplasmic granule. In terms of biological role, antibacterial and antifungal activity. Presents chitin-binding activity. The chain is Penaeidin-3j from Penaeus vannamei (Whiteleg shrimp).